A 337-amino-acid polypeptide reads, in one-letter code: Alcohol dehydrogenase 1 (337 aa).

The Zn(2+) site is built by Cys-37, His-58, Cys-89, Cys-92, Cys-95, Cys-103, and Cys-145.

It belongs to the zinc-containing alcohol dehydrogenase family. As to quaternary structure, multimeric (with different ratios of monomers). The cofactor is Zn(2+).

It catalyses the reaction a primary alcohol + NAD(+) = an aldehyde + NADH + H(+). The enzyme catalyses a secondary alcohol + NAD(+) = a ketone + NADH + H(+). It participates in alcohol metabolism; ethanol biosynthesis via fermentation pathway. Inhibited by ethanol. This is Alcohol dehydrogenase 1 (adhA) from Zymomonas mobilis subsp. mobilis (strain ATCC 31821 / ZM4 / CP4).